The sequence spans 259 residues: MSGQRLDGKIVIITGGASGIGAEAARLFTDHGAKVVIVDLQEELGQNVAVSIGLDKASFYRCDITDETEVENAVKFTVEKHGKLDVLFSNAGVMEPHGSILDLDLEAFDRTMAVNVRGAAAFIKHAARSMVASGTRGSIVCTTSVTAEIGGPGPHSYTASKHALLGLVRSACGGLGKYGIRVNGVAPYGVATGLTSYNEETVKMVEDYCSATAILKGVVLKARHVADAALFLASDDSVYISGQNLGVDGGYSVVKLTSN.

12-36 (IITGGASGIGAEAARLFTDHGAKVV) serves as a coordination point for NAD(+). Serine 144 provides a ligand contact to substrate. Catalysis depends on tyrosine 157, which acts as the Proton acceptor.

The protein belongs to the short-chain dehydrogenases/reductases (SDR) family.

In Arabidopsis thaliana (Mouse-ear cress), this protein is Short-chain dehydrogenase reductase 5 (SDR5).